The chain runs to 402 residues: DNA polymerase IV (402 aa).

In terms of domain architecture, UmuC spans Ile5–Gly187. Mg(2+)-binding residues include Asp9 and Asp105. The active site involves Glu106.

The protein belongs to the DNA polymerase type-Y family. Monomer. Mg(2+) is required as a cofactor.

The protein localises to the cytoplasm. It carries out the reaction DNA(n) + a 2'-deoxyribonucleoside 5'-triphosphate = DNA(n+1) + diphosphate. Its function is as follows. Poorly processive, error-prone DNA polymerase involved in untargeted mutagenesis. Copies undamaged DNA at stalled replication forks, which arise in vivo from mismatched or misaligned primer ends. These misaligned primers can be extended by PolIV. Exhibits no 3'-5' exonuclease (proofreading) activity. May be involved in translesional synthesis, in conjunction with the beta clamp from PolIII. The sequence is that of DNA polymerase IV from Pelotomaculum thermopropionicum (strain DSM 13744 / JCM 10971 / SI).